Consider the following 361-residue polypeptide: Arginine N(omega)-methyltransferase (361 aa).

A compositionally biased stretch (basic and acidic residues) spans 1-17 (MRHVQEARAVPAEHEAR). Residues 1 to 24 (MRHVQEARAVPAEHEARPAPVTMP) are disordered. The 297-residue stretch at 65 to 361 (DADAFAQIAR…WSDFTLRVSI (297 aa)) folds into the SAM-dependent MTase PRMT-type domain.

It belongs to the class I-like SAM-binding methyltransferase superfamily. Protein arginine N-methyltransferase family.

The catalysed reaction is L-arginine + S-adenosyl-L-methionine = N(omega)-methyl-L-arginine + S-adenosyl-L-homocysteine + H(+). The protein operates within antibiotic biosynthesis. Involved in the biosynthesis of the glucosamine-nitrosourea antibiotic streptozotocin (SZN). Catalyzes the conversion of L-arginine to N(omega)-methyl-L-arginine (L-NMA), using S-adenosyl-L-methionine (SAM) as a methyl donor. This Streptomyces achromogenes subsp. streptozoticus protein is Arginine N(omega)-methyltransferase.